Consider the following 325-residue polypeptide: Glucosyl-3-phosphoglycerate synthase (325 aa).

UDP-alpha-D-glucose-binding positions include 37–41, Ser-71, Lys-104, and 124–125; these read PSLNE and DS. Position 126 (Asp-126) interacts with Mn(2+). 171-174 contributes to the (2R)-3-phosphoglycerate binding site; sequence GRVT. Residues 216-219 and 243-248 contribute to the UDP-alpha-D-glucose site; these read YGVE and RIHDNQ. His-245 lines the Mn(2+) pocket. Asn-247 provides a ligand contact to (2R)-3-phosphoglycerate.

Belongs to the glycosyltransferase 2 family. As to quaternary structure, homodimer in solution. Requires Co(2+) as cofactor. Mg(2+) is required as a cofactor. It depends on Mn(2+) as a cofactor. Ni(2+) serves as cofactor. The cofactor is Zn(2+).

The enzyme catalyses an NDP-alpha-D-glucose + (2R)-3-phosphoglycerate = (2R)-2-O-(alpha-D-glucopyranosyl)-3-phospho-glycerate + a ribonucleoside 5'-diphosphate + H(+). The catalysed reaction is (2R)-3-phosphoglycerate + UDP-alpha-D-glucose = (2R)-2-O-(alpha-D-glucopyranosyl)-3-phospho-glycerate + UDP + H(+). It carries out the reaction ADP-alpha-D-glucose + (2R)-3-phosphoglycerate = (2R)-2-O-(alpha-D-glucopyranosyl)-3-phospho-glycerate + ADP + H(+). Its activity is regulated as follows. Inhibited by ADP and EDTA. Functionally, involved in the biosynthesis of the compatible solute mannosylglucosylglycerate through a phosphorylating pathway. Catalyzes the transfer of the glucose moiety from a nuleotide sugar such as UDP-alpha-D-glucose to the position 2 of 3-phospho-D-glycerate (3-PGA) to form glucosyl-3-phosphoglycerate (GPG). UDP-glucose is the preferred substrate, but it can be partially replaced by ADP-glucose. The protein is Glucosyl-3-phosphoglycerate synthase of Petrotoga mobilis (strain DSM 10674 / SJ95).